The following is a 128-amino-acid chain: Small ribosomal subunit protein eS8 (128 aa).

The protein belongs to the eukaryotic ribosomal protein eS8 family. In terms of assembly, part of the 30S ribosomal subunit.

In Methanococcus maripaludis (strain C5 / ATCC BAA-1333), this protein is Small ribosomal subunit protein eS8.